We begin with the raw amino-acid sequence, 332 residues long: 2,3-diketo-L-gulonate reductase (332 aa).

The active-site Proton donor is His-44. Residues 168–174 (ITMVDMS), 224–225 (WK), and 304–306 (GHE) each bind NAD(+).

This sequence belongs to the LDH2/MDH2 oxidoreductase family. DlgD subfamily. As to quaternary structure, homodimer.

The protein resides in the cytoplasm. The enzyme catalyses 3-dehydro-L-gulonate + NAD(+) = 2,3-dioxo-L-gulonate + NADH + H(+). It catalyses the reaction 3-dehydro-L-gulonate + NADP(+) = 2,3-dioxo-L-gulonate + NADPH + H(+). Functionally, catalyzes the reduction of 2,3-diketo-L-gulonate in the presence of NADH, to form 3-keto-L-gulonate. In Escherichia coli O8 (strain IAI1), this protein is 2,3-diketo-L-gulonate reductase.